A 100-amino-acid chain; its full sequence is Integration host factor subunit alpha (100 aa).

The protein belongs to the bacterial histone-like protein family. As to quaternary structure, heterodimer of an alpha and a beta chain.

In terms of biological role, this protein is one of the two subunits of integration host factor, a specific DNA-binding protein that functions in genetic recombination as well as in transcriptional and translational control. In Erythrobacter litoralis (strain HTCC2594), this protein is Integration host factor subunit alpha.